Here is a 247-residue protein sequence, read N- to C-terminus: Eukaryotic translation initiation factor 6 (247 aa).

Phosphoserine; by CK1 occurs at positions 174 and 175.

Belongs to the eIF-6 family. Monomer. Associates with the 60S ribosomal subunit. Post-translationally, phosphorylation at Ser-174 and Ser-175 promotes nuclear export.

It localises to the cytoplasm. The protein localises to the nucleus. The protein resides in the nucleolus. Its function is as follows. Binds to the 60S ribosomal subunit and prevents its association with the 40S ribosomal subunit to form the 80S initiation complex in the cytoplasm. Is also involved in ribosome biogenesis. Associates with pre-60S subunits in the nucleus and is involved in its nuclear export. This Emericella nidulans (strain FGSC A4 / ATCC 38163 / CBS 112.46 / NRRL 194 / M139) (Aspergillus nidulans) protein is Eukaryotic translation initiation factor 6 (tif6).